The primary structure comprises 863 residues: DNA mismatch repair protein MutS (863 aa).

607-614 (GPNMAGKS) lines the ATP pocket.

It belongs to the DNA mismatch repair MutS family.

Its function is as follows. This protein is involved in the repair of mismatches in DNA. It is possible that it carries out the mismatch recognition step. This protein has a weak ATPase activity. This is DNA mismatch repair protein MutS from Caldicellulosiruptor saccharolyticus (strain ATCC 43494 / DSM 8903 / Tp8T 6331).